A 583-amino-acid chain; its full sequence is 15-cis-phytoene desaturase, chloroplastic/chromoplastic (583 aa).

A chloroplast and chromoplast-targeting transit peptide spans M1–P111. FAD contacts are provided by residues G118 to G134, E141 to A142, K149, H166 to I167, and Y172. R307 provides a ligand contact to substrate. 2 residues coordinate FAD: I349 and D538. A546 serves as a coordination point for substrate. FAD is bound at residue M548.

This sequence belongs to the carotenoid/retinoid oxidoreductase family. Homotetramer. FAD is required as a cofactor.

Its subcellular location is the plastid. The protein resides in the chloroplast. It is found in the chromoplast. It localises to the membrane. It catalyses the reaction 2 a plastoquinone + 15-cis-phytoene = 9,9',15-tri-cis-zeta-carotene + 2 a plastoquinol. It participates in carotenoid biosynthesis; lycopene biosynthesis. Converts phytoene into zeta-carotene via the intermediary of phytofluene by the symmetrical introduction of two double bonds at the C-11 and C-11' positions of phytoene with a concomitant isomerization of two neighboring double bonds at the C9 and C9' positions from trans to cis. In Solanum lycopersicum (Tomato), this protein is 15-cis-phytoene desaturase, chloroplastic/chromoplastic (PDS).